Here is a 339-residue protein sequence, read N- to C-terminus: Terpene synthase 9 (339 aa).

The DDxx(x)D/E motif signature appears at aspartate 79 to serine 84. The NDxxSxxxD/E motif motif lies at asparagine 219–glutamate 227.

It belongs to the terpene synthase family.

It carries out the reaction (2E,6E)-farnesyl diphosphate = (-)-beta-barbatene + diphosphate. The enzyme catalyses (2E,6E)-farnesyl diphosphate = (E)-beta-farnesene + diphosphate. The catalysed reaction is (2E)-geranyl diphosphate = (Z)-beta-ocimene + diphosphate. It catalyses the reaction (2E)-geranyl diphosphate + H2O = linalool + diphosphate. It carries out the reaction (2E)-geranyl diphosphate = beta-myrcene + diphosphate. Functionally, terpene synthase that converts its substrate farnesyl diphosphate (FPP) into the sesquiterpene beta-barbatene as a major product as well as (E)-beta-farnesene as a minor product. Is also able to convert geranyl diphosphate (GPP) into a mixture of monoterpenes including (Z)-beta-ocimene, linalool, beta-myrcene, limonene and alpha-terpineol. In Dictyostelium discoideum (Social amoeba), this protein is Terpene synthase 9.